The following is a 476-amino-acid chain: MVRFESTDSLMLARQLPNKTVALILAGGRGSRLKDLTATRAKPAVHFGGKFRIIDFALSNCLNSGVRRIGVITQYQSHTLVQHIQRGWSFLNEEMNEFVDLLPAQQRLSTEQWYKGTADAVCQNLDIIRRYDAEYIVILAGDHIYKMDYSRMLLDHVEKGAECTVACIPVPISEGSEFGIMEVTADYQITAFYEKPANPPPIPGDPSNALASMGIYIFNADYLFKLLEEDNNTPGSSHDFGKDIIPQLTARKVVWAHPFDLSCVTSNAELPPYWRDVGTLDAYWRANLDLASVTPELDMYDRAWPIRTHMEPLPPAKFVQDRSGSHGMTMNSLVSGGCIVSGSVVVHSVLFPRVRVNSFCTIDSSLLLPDVHVGRSCRLRRCIIDRACHIPEGMVIGENADEDSARFYRSEGGGGVSDSGYAGKVRGKIEPLGFLFVRLDLLIRLSLLIRLNLFIRMNLLIILTLFFKLASIQASH.

Alpha-D-glucose 1-phosphate contacts are provided by residues Tyr-114, Gly-179, 194-195 (EK), and Ser-212.

Belongs to the bacterial/plant glucose-1-phosphate adenylyltransferase family. Homotetramer.

It catalyses the reaction alpha-D-glucose 1-phosphate + ATP + H(+) = ADP-alpha-D-glucose + diphosphate. Its pathway is glycan biosynthesis; glycogen biosynthesis. Functionally, involved in the biosynthesis of ADP-glucose, a building block required for the elongation reactions to produce glycogen. Catalyzes the reaction between ATP and alpha-D-glucose 1-phosphate (G1P) to produce pyrophosphate and ADP-Glc. The chain is Glucose-1-phosphate adenylyltransferase from Yersinia pestis.